The chain runs to 565 residues: CTP synthase (565 aa).

The amidoligase domain stretch occupies residues 1–268 (MQTKYIFVTG…GELVVDRFYP (268 aa)). Ser14 contributes to the CTP binding site. Ser14 contributes to the UTP binding site. An ATP-binding site is contributed by 15–20 (SLGKGI). Tyr55 contributes to the L-glutamine binding site. Asp72 serves as a coordination point for ATP. Mg(2+) contacts are provided by Asp72 and Glu142. CTP is bound by residues 149–151 (DIE), 189–194 (KTKPTQ), and Lys225. Residues 189–194 (KTKPTQ) and Lys225 contribute to the UTP site. In terms of domain architecture, Glutamine amidotransferase type-1 spans 301–543 (PIALVGKYVE…VRACTAYAHE (243 aa)). Residue Gly363 participates in L-glutamine binding. Cys390 (nucleophile; for glutamine hydrolysis) is an active-site residue. L-glutamine is bound by residues 391 to 394 (LGLQ), Glu414, and Arg471. Residues His516 and Glu518 contribute to the active site. The interval 545-565 (DLVTSPQPPERKAVPLASVDM) is disordered.

Belongs to the CTP synthase family. In terms of assembly, homotetramer.

It catalyses the reaction UTP + L-glutamine + ATP + H2O = CTP + L-glutamate + ADP + phosphate + 2 H(+). The enzyme catalyses L-glutamine + H2O = L-glutamate + NH4(+). It carries out the reaction UTP + NH4(+) + ATP = CTP + ADP + phosphate + 2 H(+). It participates in pyrimidine metabolism; CTP biosynthesis via de novo pathway; CTP from UDP: step 2/2. Its activity is regulated as follows. Allosterically activated by GTP, when glutamine is the substrate; GTP has no effect on the reaction when ammonia is the substrate. The allosteric effector GTP functions by stabilizing the protein conformation that binds the tetrahedral intermediate(s) formed during glutamine hydrolysis. Inhibited by the product CTP, via allosteric rather than competitive inhibition. Functionally, catalyzes the ATP-dependent amination of UTP to CTP with either L-glutamine or ammonia as the source of nitrogen. Regulates intracellular CTP levels through interactions with the four ribonucleotide triphosphates. The sequence is that of CTP synthase from Salinibacter ruber (strain DSM 13855 / M31).